A 579-amino-acid chain; its full sequence is 2-succinyl-5-enolpyruvyl-6-hydroxy-3-cyclohexene-1-carboxylate synthase (579 aa).

The protein belongs to the TPP enzyme family. MenD subfamily. Homodimer. Mg(2+) serves as cofactor. The cofactor is Mn(2+). It depends on thiamine diphosphate as a cofactor.

It catalyses the reaction isochorismate + 2-oxoglutarate + H(+) = 5-enolpyruvoyl-6-hydroxy-2-succinyl-cyclohex-3-ene-1-carboxylate + CO2. It participates in quinol/quinone metabolism; 1,4-dihydroxy-2-naphthoate biosynthesis; 1,4-dihydroxy-2-naphthoate from chorismate: step 2/7. It functions in the pathway quinol/quinone metabolism; menaquinone biosynthesis. Catalyzes the thiamine diphosphate-dependent decarboxylation of 2-oxoglutarate and the subsequent addition of the resulting succinic semialdehyde-thiamine pyrophosphate anion to isochorismate to yield 2-succinyl-5-enolpyruvyl-6-hydroxy-3-cyclohexene-1-carboxylate (SEPHCHC). The protein is 2-succinyl-5-enolpyruvyl-6-hydroxy-3-cyclohexene-1-carboxylate synthase of Oceanobacillus iheyensis (strain DSM 14371 / CIP 107618 / JCM 11309 / KCTC 3954 / HTE831).